A 105-amino-acid polypeptide reads, in one-letter code: Large ribosomal subunit protein uL24 (105 aa).

The protein belongs to the universal ribosomal protein uL24 family. As to quaternary structure, part of the 50S ribosomal subunit.

One of two assembly initiator proteins, it binds directly to the 5'-end of the 23S rRNA, where it nucleates assembly of the 50S subunit. Functionally, one of the proteins that surrounds the polypeptide exit tunnel on the outside of the subunit. The protein is Large ribosomal subunit protein uL24 of Psychrobacter sp. (strain PRwf-1).